A 388-amino-acid chain; its full sequence is Lipid-A-disaccharide synthase (388 aa).

Belongs to the LpxB family.

It carries out the reaction a lipid X + a UDP-2-N,3-O-bis[(3R)-3-hydroxyacyl]-alpha-D-glucosamine = a lipid A disaccharide + UDP + H(+). It functions in the pathway bacterial outer membrane biogenesis; LPS lipid A biosynthesis. Functionally, condensation of UDP-2,3-diacylglucosamine and 2,3-diacylglucosamine-1-phosphate to form lipid A disaccharide, a precursor of lipid A, a phosphorylated glycolipid that anchors the lipopolysaccharide to the outer membrane of the cell. The sequence is that of Lipid-A-disaccharide synthase from Burkholderia mallei (strain NCTC 10247).